The primary structure comprises 167 residues: Menaquinol:cytochrome c reductase iron-sulfur subunit (167 aa).

The Rieske domain occupies 59–158 (TKEPQRFDFK…QEVKDGFLYL (100 aa)). The [2Fe-2S] cluster site is built by C100, H102, C121, and H124. C105 and C123 form a disulfide bridge.

The protein belongs to the Rieske iron-sulfur protein family. As to quaternary structure, the main subunits of the menaquinol:cytochrome c complex are a Rieske-type iron-sulfur protein (QcrA), a cytochrome b (QcrB) and a cytochrome c (QcrC). It depends on [2Fe-2S] cluster as a cofactor.

Its function is as follows. Component of the menaquinol:cytochrome c reductase complex. The Rieske protein is a high potential 2Fe-2S protein. This Bacillus subtilis (strain 168) protein is Menaquinol:cytochrome c reductase iron-sulfur subunit (qcrA).